A 482-amino-acid chain; its full sequence is MDIQQGGNDLISLAATIRTELQQKLSSKARIHLPFDEDRTEFDKANLRFTQYERPTYLAIVDPVCEDDVIEAVKYARGKGIPFTPRGGHHSVTTTMGRFQNGICINMRPLNQMRWYAEKRHVTIGGGAITDEFVRFVHDLGMEVTFGAGLGRLQGKYGFLNDNMVSCKLVLADGSTVIASKDSHPDLFWALRGAGHNFGIALEATFQVYPQAHGGIHHTWDLEYTLDQCDEVFRTLNSVYESMPAELAIFILWLRQSSGRKHIILVNLVWSGPAAGADPYVQRFESLQPVLNSGRKSVPWPELPFSTYKEINKLFCNPEIWLRGPYKMMGAACVERFDLKTTREFFESVKSLSEEWEDRGWFSAMFECLPDQRVREISDDATAFPWRAGSNHFLMLNATPKRMEDRKVFEDHLNYWKRRFIETSGYGRLQQYVSYGNGTSTMKDPPEALYGYEPWRLEKLRNLKQKYDPDNVFRWYQPLLEP.

Positions 53–211 (ERPTYLAIVD…LEATFQVYPQ (159 aa)) constitute an FAD-binding PCMH-type domain.

This sequence belongs to the oxygen-dependent FAD-linked oxidoreductase family. Requires FAD as cofactor.

It functions in the pathway secondary metabolite biosynthesis. Functionally, FAD-linked oxidoreductase; part of the gene cluster that mediates the biosynthesis of alternapyrone derivatives. Alternapyrone is a decaketide with octa-methylation from methionine on every C2 unit except the third unit. All the domains in the polyketide synthase alt5 are apparently involved in alternapyrone synthesis, that is, the 8 CMeT, 7 KR, 7 DH, and 4 ER reactions in the 9 KS-mediated condensation steps required for alternapyrone synthesis. the alternapyrone produced by alt5 might be intensively modified by cytochrome P450 monooxygenases alt1, alt2 and alt3 and FAD-dependent oxidoreductase alt4 present in the alt gene cluster. The protein is FAD-linked oxidoreductase alt4 of Alternaria solani.